A 270-amino-acid polypeptide reads, in one-letter code: Hydroxyethylthiazole kinase (270 aa).

M47 lines the substrate pocket. ATP is bound by residues R123 and S170. G197 contributes to the substrate binding site.

The protein belongs to the Thz kinase family. Mg(2+) serves as cofactor.

The enzyme catalyses 5-(2-hydroxyethyl)-4-methylthiazole + ATP = 4-methyl-5-(2-phosphooxyethyl)-thiazole + ADP + H(+). It participates in cofactor biosynthesis; thiamine diphosphate biosynthesis; 4-methyl-5-(2-phosphoethyl)-thiazole from 5-(2-hydroxyethyl)-4-methylthiazole: step 1/1. Catalyzes the phosphorylation of the hydroxyl group of 4-methyl-5-beta-hydroxyethylthiazole (THZ). This Syntrophus aciditrophicus (strain SB) protein is Hydroxyethylthiazole kinase.